The following is an 84-amino-acid chain: Large ribosomal subunit protein bL27 (84 aa).

Residues 1–23 (MAHKKGASSSRNGRESAAQRLGV) form a disordered region.

The protein belongs to the bacterial ribosomal protein bL27 family.

The chain is Large ribosomal subunit protein bL27 from Salinispora arenicola (strain CNS-205).